The primary structure comprises 580 residues: 2-succinyl-5-enolpyruvyl-6-hydroxy-3-cyclohexene-1-carboxylate synthase (580 aa).

A disordered region spans residues 178–199 (LEPTPMPGDLTEPPAAAQPRDD).

The protein belongs to the TPP enzyme family. MenD subfamily. In terms of assembly, homodimer. Mg(2+) serves as cofactor. It depends on Mn(2+) as a cofactor. The cofactor is thiamine diphosphate.

The catalysed reaction is isochorismate + 2-oxoglutarate + H(+) = 5-enolpyruvoyl-6-hydroxy-2-succinyl-cyclohex-3-ene-1-carboxylate + CO2. It functions in the pathway quinol/quinone metabolism; 1,4-dihydroxy-2-naphthoate biosynthesis; 1,4-dihydroxy-2-naphthoate from chorismate: step 2/7. The protein operates within quinol/quinone metabolism; menaquinone biosynthesis. Functionally, catalyzes the thiamine diphosphate-dependent decarboxylation of 2-oxoglutarate and the subsequent addition of the resulting succinic semialdehyde-thiamine pyrophosphate anion to isochorismate to yield 2-succinyl-5-enolpyruvyl-6-hydroxy-3-cyclohexene-1-carboxylate (SEPHCHC). In Roseiflexus castenholzii (strain DSM 13941 / HLO8), this protein is 2-succinyl-5-enolpyruvyl-6-hydroxy-3-cyclohexene-1-carboxylate synthase.